Consider the following 371-residue polypeptide: Putative glutamate--cysteine ligase 2 (371 aa).

Belongs to the glutamate--cysteine ligase type 2 family. YbdK subfamily.

The enzyme catalyses L-cysteine + L-glutamate + ATP = gamma-L-glutamyl-L-cysteine + ADP + phosphate + H(+). Its function is as follows. ATP-dependent carboxylate-amine ligase which exhibits weak glutamate--cysteine ligase activity. This chain is Putative glutamate--cysteine ligase 2, found in Burkholderia thailandensis (strain ATCC 700388 / DSM 13276 / CCUG 48851 / CIP 106301 / E264).